A 159-amino-acid polypeptide reads, in one-letter code: S-ribosylhomocysteine lyase (159 aa).

Positions 53, 57, and 124 each coordinate Fe cation.

The protein belongs to the LuxS family. As to quaternary structure, homodimer. It depends on Fe cation as a cofactor.

The enzyme catalyses S-(5-deoxy-D-ribos-5-yl)-L-homocysteine = (S)-4,5-dihydroxypentane-2,3-dione + L-homocysteine. Its function is as follows. Involved in the synthesis of autoinducer 2 (AI-2) which is secreted by bacteria and is used to communicate both the cell density and the metabolic potential of the environment. The regulation of gene expression in response to changes in cell density is called quorum sensing. Catalyzes the transformation of S-ribosylhomocysteine (RHC) to homocysteine (HC) and 4,5-dihydroxy-2,3-pentadione (DPD). The protein is S-ribosylhomocysteine lyase of Porphyromonas gingivalis (strain ATCC BAA-308 / W83).